Consider the following 457-residue polypeptide: UDP-N-acetylmuramoyl-tripeptide--D-alanyl-D-alanine ligase (457 aa).

ATP is bound at residue 109–115 (GSSGKTT).

It belongs to the MurCDEF family. MurF subfamily.

It localises to the cytoplasm. It carries out the reaction D-alanyl-D-alanine + UDP-N-acetyl-alpha-D-muramoyl-L-alanyl-gamma-D-glutamyl-meso-2,6-diaminopimelate + ATP = UDP-N-acetyl-alpha-D-muramoyl-L-alanyl-gamma-D-glutamyl-meso-2,6-diaminopimeloyl-D-alanyl-D-alanine + ADP + phosphate + H(+). It functions in the pathway cell wall biogenesis; peptidoglycan biosynthesis. Involved in cell wall formation. Catalyzes the final step in the synthesis of UDP-N-acetylmuramoyl-pentapeptide, the precursor of murein. This chain is UDP-N-acetylmuramoyl-tripeptide--D-alanyl-D-alanine ligase, found in Haemophilus influenzae (strain ATCC 51907 / DSM 11121 / KW20 / Rd).